The chain runs to 237 residues: MRPSKRAADAMRDVTLERAVARYAEGSCLVTFGNTRVLCTASLEERGPPWLRGSGKGWVTAEYAMLPRATHERTRREVNSGKPSGRTQEIQRLIGRSLRAVTNLPALGERQITVDCDVIQADGGTRTASITGAWVALHDCFAWMRARSIISVDPLKDHVAAVSCGIYKGQPVLDLDYAEDSAAETDANFVVTGKGGIVEVQGTAELEPFTDEQFLELLRLAKGGVAGLVELQRKAIA.

Residues arginine 86 and 124–126 (GTR) contribute to the phosphate site.

The protein belongs to the RNase PH family. In terms of assembly, homohexameric ring arranged as a trimer of dimers.

The catalysed reaction is tRNA(n+1) + phosphate = tRNA(n) + a ribonucleoside 5'-diphosphate. Functionally, phosphorolytic 3'-5' exoribonuclease that plays an important role in tRNA 3'-end maturation. Removes nucleotide residues following the 3'-CCA terminus of tRNAs; can also add nucleotides to the ends of RNA molecules by using nucleoside diphosphates as substrates, but this may not be physiologically important. Probably plays a role in initiation of 16S rRNA degradation (leading to ribosome degradation) during starvation. This is Ribonuclease PH from Methylorubrum extorquens (strain CM4 / NCIMB 13688) (Methylobacterium extorquens).